Reading from the N-terminus, the 442-residue chain is Trigger factor (442 aa).

A PPIase FKBP-type domain is found at 165 to 250 (DDTAQIDFEG…LHKILQKELP (86 aa)).

Belongs to the FKBP-type PPIase family. Tig subfamily.

It is found in the cytoplasm. It catalyses the reaction [protein]-peptidylproline (omega=180) = [protein]-peptidylproline (omega=0). Its function is as follows. Involved in protein export. Acts as a chaperone by maintaining the newly synthesized protein in an open conformation. Functions as a peptidyl-prolyl cis-trans isomerase. The sequence is that of Trigger factor from Helicobacter hepaticus (strain ATCC 51449 / 3B1).